Here is a 423-residue protein sequence, read N- to C-terminus: Serine--tRNA ligase (423 aa).

L-serine is bound at residue 230–232 (TAE). 261–263 (RSE) lines the ATP pocket. E284 is an L-serine binding site. 348–351 (EISS) contributes to the ATP binding site. S384 is an L-serine binding site.

Belongs to the class-II aminoacyl-tRNA synthetase family. Type-1 seryl-tRNA synthetase subfamily. In terms of assembly, homodimer. The tRNA molecule binds across the dimer.

It localises to the cytoplasm. It catalyses the reaction tRNA(Ser) + L-serine + ATP = L-seryl-tRNA(Ser) + AMP + diphosphate + H(+). The enzyme catalyses tRNA(Sec) + L-serine + ATP = L-seryl-tRNA(Sec) + AMP + diphosphate + H(+). It participates in aminoacyl-tRNA biosynthesis; selenocysteinyl-tRNA(Sec) biosynthesis; L-seryl-tRNA(Sec) from L-serine and tRNA(Sec): step 1/1. Catalyzes the attachment of serine to tRNA(Ser). Is also able to aminoacylate tRNA(Sec) with serine, to form the misacylated tRNA L-seryl-tRNA(Sec), which will be further converted into selenocysteinyl-tRNA(Sec). The polypeptide is Serine--tRNA ligase (Syntrophobacter fumaroxidans (strain DSM 10017 / MPOB)).